Here is a 113-residue protein sequence, read N- to C-terminus: Dolichyl-diphosphooligosaccharide--protein glycosyltransferase subunit dad-1 (113 aa).

At 1–32 the chain is on the cytoplasmic side; that stretch reads MAAQVVPVLSKLFDDYQKTTSSKLKIIDAYMT. A helical membrane pass occupies residues 33 to 53; sequence YILFTGIFQFIYCLLVGTFPF. Over 54–55 the chain is Lumenal; the sequence is NS. The chain crosses the membrane as a helical span at residues 56 to 78; sequence FLSGFISTVTSFVLASCLRMQVN. Topologically, residues 79–92 are cytoplasmic; it reads QENRSEFTAVSTER. The chain crosses the membrane as a helical span at residues 93–113; that stretch reads AFADFIFANLILHLVVVNFLG.

This sequence belongs to the DAD/OST2 family. In terms of assembly, component of the oligosaccharyltransferase (OST) complex.

Its subcellular location is the endoplasmic reticulum membrane. Its pathway is protein modification; protein glycosylation. Functionally, subunit of the oligosaccharyl transferase (OST) complex that catalyzes the initial transfer of a defined glycan (Glc(3)Man(9)GlcNAc(2) in eukaryotes) from the lipid carrier dolichol-pyrophosphate to an asparagine residue within an Asn-X-Ser/Thr consensus motif in nascent polypeptide chains, the first step in protein N-glycosylation. N-glycosylation occurs cotranslationally and the complex associates with the Sec61 complex at the channel-forming translocon complex that mediates protein translocation across the endoplasmic reticulum (ER). All subunits are required for a maximal enzyme activity. Possesses cell death-inhibiting activity. Suppresses some programmed cell death in C.elegans. This Caenorhabditis elegans protein is Dolichyl-diphosphooligosaccharide--protein glycosyltransferase subunit dad-1.